The chain runs to 1143 residues: DNA-directed RNA polymerase subunit beta (1143 aa).

The protein belongs to the RNA polymerase beta chain family. In terms of assembly, in plastids the minimal PEP RNA polymerase catalytic core is composed of four subunits: alpha, beta, beta', and beta''. When a (nuclear-encoded) sigma factor is associated with the core the holoenzyme is formed, which can initiate transcription.

It localises to the plastid. The protein localises to the chloroplast. It catalyses the reaction RNA(n) + a ribonucleoside 5'-triphosphate = RNA(n+1) + diphosphate. DNA-dependent RNA polymerase catalyzes the transcription of DNA into RNA using the four ribonucleoside triphosphates as substrates. This chain is DNA-directed RNA polymerase subunit beta, found in Pyropia yezoensis (Susabi-nori).